The primary structure comprises 182 residues: Large ribosomal subunit protein uL16 (182 aa).

This sequence belongs to the universal ribosomal protein uL16 family.

The chain is Large ribosomal subunit protein uL16 from Pyrobaculum islandicum (strain DSM 4184 / JCM 9189 / GEO3).